We begin with the raw amino-acid sequence, 218 residues long: uncharacterized protein (218 aa).

2 consecutive transmembrane segments (helical) span residues 8 to 28 (LAVF…ATAG) and 158 to 178 (ILFY…FLLI).

The protein localises to the cell membrane. This is an uncharacterized protein from Mycoplasma genitalium (strain ATCC 33530 / DSM 19775 / NCTC 10195 / G37) (Mycoplasmoides genitalium).